The primary structure comprises 214 residues: uncharacterized protein (214 aa).

Y129 (proton acceptor) is an active-site residue.

It belongs to the NAD(P)-dependent epimerase/dehydratase family.

This is an uncharacterized protein from Bacillus subtilis (strain 168).